Reading from the N-terminus, the 175-residue chain is Sec-independent protein translocase protein TatB (175 aa).

The chain crosses the membrane as a helical span at residues 1-21 (MLDLGLSKMALIGVVALVVLG). 2 disordered regions span residues 96–115 (VSPG…AASG) and 153–175 (VQSG…ARFL). Basic residues predominate over residues 160-175 (VARHRPASLRRPARFL).

This sequence belongs to the TatB family. In terms of assembly, the Tat system comprises two distinct complexes: a TatABC complex, containing multiple copies of TatA, TatB and TatC subunits, and a separate TatA complex, containing only TatA subunits. Substrates initially bind to the TatABC complex, which probably triggers association of the separate TatA complex to form the active translocon.

Its subcellular location is the cell inner membrane. Its function is as follows. Part of the twin-arginine translocation (Tat) system that transports large folded proteins containing a characteristic twin-arginine motif in their signal peptide across membranes. Together with TatC, TatB is part of a receptor directly interacting with Tat signal peptides. TatB may form an oligomeric binding site that transiently accommodates folded Tat precursor proteins before their translocation. This is Sec-independent protein translocase protein TatB from Burkholderia mallei (strain ATCC 23344).